The sequence spans 293 residues: NAD kinase (293 aa).

Aspartate 73 (proton acceptor) is an active-site residue. Residues 73–74 (DG), histidine 78, 147–148 (ND), arginine 158, arginine 175, aspartate 177, 188–193 (TAYALS), and glutamine 248 contribute to the NAD(+) site.

This sequence belongs to the NAD kinase family. A divalent metal cation serves as cofactor.

The protein localises to the cytoplasm. The catalysed reaction is NAD(+) + ATP = ADP + NADP(+) + H(+). Its function is as follows. Involved in the regulation of the intracellular balance of NAD and NADP, and is a key enzyme in the biosynthesis of NADP. Catalyzes specifically the phosphorylation on 2'-hydroxyl of the adenosine moiety of NAD to yield NADP. The polypeptide is NAD kinase (Nitrosococcus oceani (strain ATCC 19707 / BCRC 17464 / JCM 30415 / NCIMB 11848 / C-107)).